The following is a 315-amino-acid chain: MAPQRRGPPRVPEGNSAAERRHANSTKKDRLPQEAQRTWLRIVALGVSLALVTFLLWSSAGIDDDVAEVVAHRGEVLEGRFIEVPCSEDYDGHRRFEGCTPRKCGRGVTDIVITREEAEQIRRIAEKGLSLGGSDGGASILDLHSGALSVGKHFVNLYRYFGDKIQTIFSEEDFQLYRDIRQKVQLTIAEAFGIRASLLYLTKPTFFSRINSTEAQTAHDEYWHAHVDKVTYGSFDYTSLLYLSDYLEDFGGGRFVFMEEGSNKTVEPRAGRVSFFTSGSENLHRVEKVLWGTRYAITIAFTCNPDHGIEDPVLT.

A disordered region spans residues 1-32; it reads MAPQRRGPPRVPEGNSAAERRHANSTKKDRLP. Over 1 to 41 the chain is Cytoplasmic; it reads MAPQRRGPPRVPEGNSAAERRHANSTKKDRLPQEAQRTWLR. Over residues 18–32 the composition is skewed to basic and acidic residues; the sequence is AERRHANSTKKDRLP. Residues 42–62 traverse the membrane as a helical; Signal-anchor for type II membrane protein segment; the sequence is IVALGVSLALVTFLLWSSAGI. At 63–315 the chain is on the lumenal side; that stretch reads DDDVAEVVAH…DHGIEDPVLT (253 aa). Positions 203 to 305 constitute a Fe2OG dioxygenase domain; the sequence is KPTFFSRINS…AITIAFTCNP (103 aa). An N-linked (GlcNAc...) asparagine glycan is attached at asparagine 211. Fe cation contacts are provided by histidine 226 and aspartate 228. The N-linked (GlcNAc...) asparagine glycan is linked to asparagine 263. Residue histidine 284 coordinates Fe cation. Residue arginine 294 is part of the active site. Arginine 294 is a binding site for 2-oxoglutarate.

The protein belongs to the OGFOD3 family. The cofactor is Fe(2+). Requires L-ascorbate as cofactor.

The protein resides in the membrane. This is 2-oxoglutarate and iron-dependent oxygenase domain-containing protein 3 (Ogfod3) from Rattus norvegicus (Rat).